We begin with the raw amino-acid sequence, 109 residues long: Large ribosomal subunit protein uL24 (109 aa).

This sequence belongs to the universal ribosomal protein uL24 family. As to quaternary structure, part of the 50S ribosomal subunit.

In terms of biological role, one of two assembly initiator proteins, it binds directly to the 5'-end of the 23S rRNA, where it nucleates assembly of the 50S subunit. One of the proteins that surrounds the polypeptide exit tunnel on the outside of the subunit. This is Large ribosomal subunit protein uL24 from Desulforapulum autotrophicum (strain ATCC 43914 / DSM 3382 / VKM B-1955 / HRM2) (Desulfobacterium autotrophicum).